The chain runs to 657 residues: N-acetylgalactosaminyltransferase 7 (657 aa).

The Cytoplasmic portion of the chain corresponds to 1–6; that stretch reads MRLKIG. A helical; Signal-anchor for type II membrane protein membrane pass occupies residues 7–29; that stretch reads FILRSLLVVGSFLGLVVLWSSLT. The Lumenal segment spans residues 30–657; that stretch reads PRPDDPSPLS…KWEMNNIHSV (628 aa). Residues 31-65 form a disordered region; sequence RPDDPSPLSRMREDRDVNDPMPNRGGNGLAPGEDR. 5 disulfide bridges follow: C197–C435, C426–C507, C545–C562, C585–C600, and C625–C640. The segment at 206–317 is catalytic subdomain A; sequence LLTSSVVIVF…VNWYAPLVAP (112 aa). Positions 247 and 277 each coordinate substrate. The Mn(2+) site is built by D301 and H303. Positions 381–443 are catalytic subdomain B; sequence PYRSPAMAGG…PCSRVGHIYR (63 aa). W412 provides a ligand contact to substrate. Residue H440 coordinates Mn(2+). Residue R443 coordinates substrate. The 121-residue stretch at 532–652 folds into the Ricin B-type lectin domain; the sequence is VDWGEIRGFE…SKTTQKWEMN (121 aa).

Belongs to the glycosyltransferase 2 family. GalNAc-T subfamily. The cofactor is Mn(2+). In terms of tissue distribution, widely expressed. Expressed in uterus, retina, kidney, small intestine, omentum, stomach and CNS.

The protein localises to the golgi apparatus membrane. The catalysed reaction is L-seryl-[protein] + UDP-N-acetyl-alpha-D-galactosamine = a 3-O-[N-acetyl-alpha-D-galactosaminyl]-L-seryl-[protein] + UDP + H(+). The enzyme catalyses L-threonyl-[protein] + UDP-N-acetyl-alpha-D-galactosamine = a 3-O-[N-acetyl-alpha-D-galactosaminyl]-L-threonyl-[protein] + UDP + H(+). It participates in protein modification; protein glycosylation. Its function is as follows. Glycopeptide transferase involved in O-linked oligosaccharide biosynthesis, which catalyzes the transfer of an N-acetyl-D-galactosamine residue to an already glycosylated peptide. In contrast to other proteins of the family, it does not act as a peptide transferase that transfers GalNAc onto serine or threonine residue on the protein receptor, but instead requires the prior addition of a GalNAc on a peptide before adding additional GalNAc moieties. Some peptide transferase activity is however not excluded, considering that its appropriate peptide substrate may remain unidentified. The sequence is that of N-acetylgalactosaminyltransferase 7 (GALNT7) from Homo sapiens (Human).